Consider the following 121-residue polypeptide: Prismalin-14 (121 aa).

A signal peptide spans 1–16; sequence MRSLLVLLALAACASA. Residue Gln-17 is modified to Pyrrolidone carboxylic acid. Repeat copies occupy residues 48-51, 52-55, 56-59, and 60-63. Residues 48–63 are 4 X 4 AA approximate tandem repeats of P-I-Y-R; sequence PIYRPIYRPIYYPQII.

Expressed only at the mantle edge where it is found predominantly in the inner side of the outer mantle fold.

Functionally, displays inhibitory activity against calcium carbonate precipitation, binds calcium and affects crystallization of calcium carbonate in vitro. May be involved in calcification of the prismatic layer of the shell. The protein is Prismalin-14 of Pinctada fucata (Akoya pearl oyster).